The primary structure comprises 552 residues: Hyaluronan synthase 2 (552 aa).

Over 1 to 11 (MHCERFLCILR) the chain is Cytoplasmic. The helical transmembrane segment at 12-32 (IIGTTLFGVSLLLGITAAYIV) threads the bilayer. At 33 to 45 (GYQFIQTDNYYFS) the chain is on the extracellular side. A helical membrane pass occupies residues 46–66 (FGLYGAFLASHLIIQSLFAFL). Residues 67-374 (EHRKMKKSLE…NAMWFHKHHL (308 aa)) are Cytoplasmic-facing. At Thr110 the chain carries Phosphothreonine. Lys190 is covalently cross-linked (Glycyl lysine isopeptide (Lys-Gly) (interchain with G-Cter in ubiquitin)). A glycan (O-linked (GlcNAc) serine) is linked at Ser221. A Phosphothreonine modification is found at Thr328. Residues 375-395 (WMTYEAIITGFFPFFLIATVI) form a helical membrane-spanning segment. The Extracellular segment spans residues 396-402 (QLFYRGK). Residues 403–423 (IWNILLFLLTVQLVGLIKSSF) traverse the membrane as a helical segment. At 424 to 429 (ASCLRG) the chain is on the cytoplasmic side. Residues 430–450 (NIVMVFMSLYSVLYMSSLLPA) form a helical membrane-spanning segment. Over 451-475 (KMFAIATINKAGWGTSGRKTIVVNF) the chain is Extracellular. Residues 476–496 (IGLIPVSVWFTILLGGVIFTI) form a helical membrane-spanning segment. Residues 497-510 (YKESKRPFSESKQT) are Cytoplasmic-facing. The chain crosses the membrane as a helical span at residues 511–531 (VLIVGTLLYACYWVMLLTLYV). At 532-552 (VLINKCGRRKKGQQYDMVLDV) the chain is on the extracellular side.

This sequence belongs to the NodC/HAS family. As to quaternary structure, homodimer; dimerization promotes enzymatic activity. Forms heterodimer with HAS3. Forms heterodimer with HAS1. Requires Mg(2+) as cofactor. Phosphorylation at Thr-328 is essential for hyaluronan synthase activity. Phosphorylation at Thr-110 is required for transport from ER to Golgi. In terms of processing, O-GlcNAcylation at Ser-221 increases the stability of HAS2 and plasma membrane localization. Post-translationally, ubiquitination at Lys-190; this ubiquitination is essential for hyaluronan synthase activity and homo- or hetero-oligomerization. Can also be poly-ubiquitinated. Deubiquitinated by USP17 and USP4. USP17 efficiently removes 'Lys-63'- and 'Lys-48'-linked polyubiquitin chains, whereas USP4 preferentially removes monoubiquitination and, partially, both 'Lys-63'- and 'Lys-48'-linked polyubiquitin chain. In terms of tissue distribution, expressed in fibroblasts.

It localises to the cell membrane. Its subcellular location is the endoplasmic reticulum membrane. The protein resides in the vesicle. It is found in the golgi apparatus membrane. The protein localises to the lysosome. It carries out the reaction [hyaluronan](n) + UDP-N-acetyl-alpha-D-glucosamine = N-acetyl-beta-D-glucosaminyl-(1-&gt;4)-[hyaluronan](n) + UDP + H(+). It catalyses the reaction N-acetyl-beta-D-glucosaminyl-(1-&gt;4)-[hyaluronan](n) + UDP-alpha-D-glucuronate = [hyaluronan](n+1) + UDP + H(+). The protein operates within glycan biosynthesis; hyaluronan biosynthesis. With respect to regulation, regulated by several post-translational modifications such as ubiquitination/deubiquitination, phosphorylation and O-GlcNAcylation. The enzymatic activity depends on the availability of UDP-GlcUA and UDP-GlcNAc. In terms of biological role, catalyzes the addition of GlcNAc or GlcUA monosaccharides to the nascent hyaluronan polymer. Therefore, it is essential to hyaluronan synthesis a major component of most extracellular matrices that has a structural role in tissues architectures and regulates cell adhesion, migration and differentiation. This is one of three isoenzymes responsible for cellular hyaluronan synthesis and it is particularly responsible for the synthesis of high molecular mass hyaluronan. The sequence is that of Hyaluronan synthase 2 from Homo sapiens (Human).